We begin with the raw amino-acid sequence, 526 residues long: Rho guanine nucleotide exchange factor 3 (526 aa).

The segment at 20-40 is disordered; that stretch reads ELPPASGPAKDAEEPSNKRVK. Residues Ser-47 and Ser-70 each carry the phosphoserine modification. The DH domain maps to 122 to 304; the sequence is KRQEAIFELS…QGIVAEINTK (183 aa). The PH domain occupies 291–449; that stretch reads INIIQGIVAE…WLNCIRQAKE (159 aa). Positions 464 to 526 are disordered; sequence EGSFLNPTTG…GNSRHGESNV (63 aa). Residues 466-475 are compositionally biased toward polar residues; that stretch reads SFLNPTTGSR.

Interacts with RHOA and RHOB.

It localises to the cytoplasm. Its function is as follows. Acts as a guanine nucleotide exchange factor (GEF) for RhoA and RhoB GTPases. This chain is Rho guanine nucleotide exchange factor 3 (ARHGEF3), found in Pongo abelii (Sumatran orangutan).